Consider the following 418-residue polypeptide: 3-phosphoshikimate 1-carboxyvinyltransferase (418 aa).

Positions 26, 27, and 31 each coordinate 3-phosphoshikimate. Lysine 26 serves as a coordination point for phosphoenolpyruvate. 2 residues coordinate phosphoenolpyruvate: glycine 97 and arginine 125. 6 residues coordinate 3-phosphoshikimate: serine 170, serine 171, glutamine 172, aspartate 297, asparagine 320, and lysine 324. Residue glutamine 172 coordinates phosphoenolpyruvate. Aspartate 297 functions as the Proton acceptor in the catalytic mechanism. Residues arginine 328, arginine 375, and lysine 400 each coordinate phosphoenolpyruvate.

Belongs to the EPSP synthase family. As to quaternary structure, monomer.

The protein localises to the cytoplasm. The enzyme catalyses 3-phosphoshikimate + phosphoenolpyruvate = 5-O-(1-carboxyvinyl)-3-phosphoshikimate + phosphate. It participates in metabolic intermediate biosynthesis; chorismate biosynthesis; chorismate from D-erythrose 4-phosphate and phosphoenolpyruvate: step 6/7. In terms of biological role, catalyzes the transfer of the enolpyruvyl moiety of phosphoenolpyruvate (PEP) to the 5-hydroxyl of shikimate-3-phosphate (S3P) to produce enolpyruvyl shikimate-3-phosphate and inorganic phosphate. The polypeptide is 3-phosphoshikimate 1-carboxyvinyltransferase (Pseudomonas savastanoi pv. phaseolicola (strain 1448A / Race 6) (Pseudomonas syringae pv. phaseolicola (strain 1448A / Race 6))).